The following is an 80-amino-acid chain: Large ribosomal subunit protein bL31 (80 aa).

4 residues coordinate Zn(2+): Cys16, Cys18, Cys38, and Cys41.

It belongs to the bacterial ribosomal protein bL31 family. Type A subfamily. As to quaternary structure, part of the 50S ribosomal subunit. Requires Zn(2+) as cofactor.

Its function is as follows. Binds the 23S rRNA. This chain is Large ribosomal subunit protein bL31, found in Mycobacterium avium (strain 104).